The primary structure comprises 1021 residues: Chondroitin sulfate ABC endolyase (1021 aa).

An N-terminal signal peptide occupies residues Met1 to Ala24. Na(+)-binding residues include His43, Met70, Gln73, and Asp211. His501 (proton acceptor) is an active-site residue. Tyr508 functions as the Proton donor in the catalytic mechanism.

This sequence belongs to the polysaccharide lyase 8 family. Monomer.

The protein resides in the periplasm. The catalysed reaction is Endolytic cleavage of (1-&gt;4)-beta-galactosaminic bonds between N-acetylgalactosamine and either D-glucuronic acid or L-iduronic acid to produce a mixture of Delta(4)-unsaturated oligosaccharides of different sizes that are ultimately degraded to Delta(4)-unsaturated tetra- and disaccharides.. Is inhibited by Zn(2+), Ni(2+), Fe(2+) and Cu(2+). Its function is as follows. Endolytic, broad-specificity glycosaminoglycan lyase, which degrades the polysaccharides chondroitin, chondroitin-4-sulfate, chondroitin-6-sulfate, dermatan sulfate and to a lesser extent hyaluronan, by beta-elimination of 1,4-hexosaminidic bond to unsaturated tetrasaccharides and disaccharides. Is not active against keratan sulfate, heparan sulfate, and heparin. Is able to promote functional recovery in the injured central nervous system (CNS), via its role in the disruption of the normal organization of the extracellular matrix (ECM). This Proteus vulgaris protein is Chondroitin sulfate ABC endolyase.